The following is a 401-amino-acid chain: Nicotinate phosphoribosyltransferase (401 aa).

His221 carries the phosphohistidine; by autocatalysis modification.

Belongs to the NAPRTase family. Post-translationally, transiently phosphorylated on a His residue during the reaction cycle. Phosphorylation strongly increases the affinity for substrates and increases the rate of nicotinate D-ribonucleotide production. Dephosphorylation regenerates the low-affinity form of the enzyme, leading to product release.

The enzyme catalyses nicotinate + 5-phospho-alpha-D-ribose 1-diphosphate + ATP + H2O = nicotinate beta-D-ribonucleotide + ADP + phosphate + diphosphate. Its pathway is cofactor biosynthesis; NAD(+) biosynthesis; nicotinate D-ribonucleotide from nicotinate: step 1/1. In terms of biological role, catalyzes the synthesis of beta-nicotinate D-ribonucleotide from nicotinate and 5-phospho-D-ribose 1-phosphate at the expense of ATP. This is Nicotinate phosphoribosyltransferase from Yersinia enterocolitica serotype O:8 / biotype 1B (strain NCTC 13174 / 8081).